The primary structure comprises 430 residues: Protein translocase subunit SecY (430 aa).

10 helical membrane-spanning segments follow: residues 18–38 (IFFTLAMLVIFKIGTYIPAPG), 68–88 (FSIFAMGIMPYITASIVMQLL), 117–137 (FAIILAFIQSIGMAFQFNNYL), 147–167 (VMSYLLIAVVLTAGTAFLIWL), 174–194 (FGVGNGISLIIFAGILSTLPS), 217–237 (ILGLIVALILLTVGAIFVLEA), 270–290 (VIPVIFAMAFFLLPRTLTLFF), 308–328 (NIGMIIYVVLIIAFAYFYAFV), 368–388 (FVGSIFLAAIAILPIIATKFM), and 389–409 (GLPQSIQIGGTSLLIVIGVAI).

Belongs to the SecY/SEC61-alpha family. As to quaternary structure, component of the Sec protein translocase complex. Heterotrimer consisting of SecY, SecE and SecG subunits. The heterotrimers can form oligomers, although 1 heterotrimer is thought to be able to translocate proteins. Interacts with the ribosome. Interacts with SecDF, and other proteins may be involved. Interacts with SecA.

It is found in the cell membrane. Its function is as follows. The central subunit of the protein translocation channel SecYEG. Consists of two halves formed by TMs 1-5 and 6-10. These two domains form a lateral gate at the front which open onto the bilayer between TMs 2 and 7, and are clamped together by SecE at the back. The channel is closed by both a pore ring composed of hydrophobic SecY resides and a short helix (helix 2A) on the extracellular side of the membrane which forms a plug. The plug probably moves laterally to allow the channel to open. The ring and the pore may move independently. This Staphylococcus epidermidis (strain ATCC 35984 / DSM 28319 / BCRC 17069 / CCUG 31568 / BM 3577 / RP62A) protein is Protein translocase subunit SecY.